A 332-amino-acid chain; its full sequence is Ribosomal RNA small subunit methyltransferase C (332 aa).

Belongs to the methyltransferase superfamily. RsmC family. Monomer.

It is found in the cytoplasm. It catalyses the reaction guanosine(1207) in 16S rRNA + S-adenosyl-L-methionine = N(2)-methylguanosine(1207) in 16S rRNA + S-adenosyl-L-homocysteine + H(+). In terms of biological role, specifically methylates the guanine in position 1207 of 16S rRNA in the 30S particle. In Pseudomonas fluorescens (strain ATCC BAA-477 / NRRL B-23932 / Pf-5), this protein is Ribosomal RNA small subunit methyltransferase C.